The sequence spans 729 residues: Kinesin-like protein KAR3 (729 aa).

Residues 1 to 48 (MESLPRTPTKGRSTQHLSTPSPKNDILAMNGHKRRNTTTPPPKHTLLK) form a disordered region. The tract at residues 1–109 (MESLPRTPTK…ENVNELNRTQ (109 aa)) is globular. The span at 10 to 22 (KGRSTQHLSTPSP) shows a compositional bias: polar residues. A coiled-coil region spans residues 110–357 (AILFEKKATL…LEEYIKDTEL (248 aa)). Positions 386, 388, 392, 454, 477, 478, 479, 480, 481, 482, 554, 579, and 694 each coordinate ATP. The Kinesin motor domain maps to 386-723 (NIRVYCRIRP…LRFASKVNST (338 aa)).

The protein belongs to the TRAFAC class myosin-kinesin ATPase superfamily. Kinesin family. NCD subfamily. As to quaternary structure, interacts with CIK1; the interaction is direct. Interacts with VIK1; the interaction is direct.

It localises to the cytoplasm. The protein localises to the cytoskeleton. The protein resides in the microtubule organizing center. Its subcellular location is the spindle pole body. It is found in the nucleus. It localises to the chromosome. The protein localises to the spindle. It catalyses the reaction ATP + H2O = ADP + phosphate + H(+). The enzyme catalyses ATP + H2O + a kinesin associated with a microtubule at position (n) = ADP + phosphate + a kinesin associated with a microtubule at position (n-1, toward the minus end).. In terms of biological role, minus end-directed microtubule (MT) motor involved in spindle midzone assembly, poleward transport of newly captured kinetochores along the lateral side of MTs, karyogamy (nuclear fusion) during mating, and with an essential function in meiosis I. Functions together with the accessory proteins CIK1 or VIK1. Drives the poleward transport of newly captured kinetochores along the lateral side of MTs, both during S-phase and during M-phase. To contribute to spindle midzone assembly during mitotic metaphase, the nuclear KAR3-CIK1 motor cross-links anti-parallel microtubules to align them on the spindle axis; as the motor travels polewards splayed microtubules are pulled into alignment. During the karyogamy (nuclear fusion) step of mating, KAR3-CIK1 cross-links antiparallel cytoplasmic microtubules emanating from the spindle pole bodies of mating partners; the motor activity of KAR3 creates the force that pulls the nuclei together by sliding cross-linked microtubules past one another. KAR3-CIK1 promotes microtubule shortening predominantly from the microtubule plus-end. Together with cytoplasmic VIK1, may act to stabilize microtubules. Requires accessory protein VIK1 for spindle pole body localization and to allow the CIN8 and KIP1 motors to generate outwardly directed spindle forces. Essential during meiosis I. The ATPase activity is stimulated by microtubule-binding. The polypeptide is Kinesin-like protein KAR3 (KAR3) (Saccharomyces cerevisiae (strain ATCC 204508 / S288c) (Baker's yeast)).